Reading from the N-terminus, the 328-residue chain is MSNDLTSESKTANRAAGEKFRDADKLAHIPIKVVSSTKATMLRKPSWLRIKLPKSSERIDNIKANLRKNDLHSVCEEASCPNLSECFNHGTATFMILGDICTRRCPFCDVGHGRPLAPKSDEPKKLANSLKDMGLKYVVITSVDRDDLRDGGAQQFADCVKEIGEQAPNTKVEILVPDFRGRMDRALEILNQNPPHVFNHNMETAPRLYTKVRPGANYQWSLDLLKRFGEANPDVTTKSGLMVGLGETNEEILEVMQDLRDHGVTMLTVGQYLQPSKDHLAVERYVHPDDFAMFEREAKKMGYEHAACGPLVRSSYHADKQAAGEEVK.

Cysteine 75, cysteine 80, cysteine 86, cysteine 101, cysteine 105, cysteine 108, and serine 315 together coordinate [4Fe-4S] cluster. Positions 87 to 304 (FNHGTATFMI…EREAKKMGYE (218 aa)) constitute a Radical SAM core domain.

It belongs to the radical SAM superfamily. Lipoyl synthase family. It depends on [4Fe-4S] cluster as a cofactor.

The protein resides in the cytoplasm. It carries out the reaction [[Fe-S] cluster scaffold protein carrying a second [4Fe-4S](2+) cluster] + N(6)-octanoyl-L-lysyl-[protein] + 2 oxidized [2Fe-2S]-[ferredoxin] + 2 S-adenosyl-L-methionine + 4 H(+) = [[Fe-S] cluster scaffold protein] + N(6)-[(R)-dihydrolipoyl]-L-lysyl-[protein] + 4 Fe(3+) + 2 hydrogen sulfide + 2 5'-deoxyadenosine + 2 L-methionine + 2 reduced [2Fe-2S]-[ferredoxin]. It participates in protein modification; protein lipoylation via endogenous pathway; protein N(6)-(lipoyl)lysine from octanoyl-[acyl-carrier-protein]: step 2/2. Its function is as follows. Catalyzes the radical-mediated insertion of two sulfur atoms into the C-6 and C-8 positions of the octanoyl moiety bound to the lipoyl domains of lipoate-dependent enzymes, thereby converting the octanoylated domains into lipoylated derivatives. This is Lipoyl synthase from Colwellia psychrerythraea (strain 34H / ATCC BAA-681) (Vibrio psychroerythus).